The chain runs to 717 residues: Envelope glycoprotein H (717 aa).

A signal peptide spans 1–18 (MTILQLFLVFLNILEALC). The Virion surface portion of the chain corresponds to 19–693 (DYQLPKPRIN…AYRARLVNFI (675 aa)). Asn-43, Asn-59, Asn-80, and Asn-128 each carry an N-linked (GlcNAc...) asparagine; by host glycan. Residues 177–239 (TPAYPTISCH…SNDVFSLVIF (63 aa)) form an interaction with gL region. N-linked (GlcNAc...) asparagine; by host glycans are attached at residues Asn-444, Asn-560, Asn-613, and Asn-675. A helical transmembrane segment spans residues 694–714 (IVIMVFILFLVGLYLLYKLFV). The Intravirion segment spans residues 715–717 (YLT).

The protein belongs to the herpesviridae glycoprotein H family. As to quaternary structure, interacts with glycoprotein L (gL); this interaction is necessary for the correct processing and cell surface expression of gH. The heterodimer gH/gL seems to interact with gB trimers during fusion. N-glycosylated, O-glycosylated, and sialylated.

The protein localises to the virion membrane. The protein resides in the host cell membrane. It is found in the host endosome membrane. Functionally, the heterodimer glycoprotein H-glycoprotein L is required for the fusion of viral and plasma membranes leading to virus entry into the host cell. Following initial binding to host receptor, membrane fusion is mediated by the fusion machinery composed of gB and the heterodimer gH/gL. May also be involved in the fusion between the virion envelope and the outer nuclear membrane during virion morphogenesis. In Saimiriine herpesvirus 2 (strain 11) (SaHV-2), this protein is Envelope glycoprotein H.